The chain runs to 343 residues: Protein FAM50A-B (343 aa).

Disordered regions lie at residues 1 to 25 (MAQY…EKQR) and 125 to 181 (EEDE…EEEN). A compositionally biased stretch (acidic residues) spans 125–142 (EEDEECEDEESEEEEEEY). Basic and acidic residues predominate over residues 172–181 (PDRDREEEEN).

The protein belongs to the FAM50 family.

It is found in the nucleus. Its function is as follows. Probably involved in the regulation of pre-mRNA splicing. The protein is Protein FAM50A-B (fam50a-b) of Xenopus laevis (African clawed frog).